The chain runs to 179 residues: Repressor of phase 1 flagellin gene (179 aa).

Its function is as follows. Transcriptional repressor of the FliC phase-1 flagellin. The polypeptide is Repressor of phase 1 flagellin gene (fljA) (Salmonella typhimurium (strain LT2 / SGSC1412 / ATCC 700720)).